The primary structure comprises 508 residues: Metalloprotease TIKI1 (508 aa).

A signal peptide spans 1-23 (MVIIWNIFLPAFLLVLAKASLRS). The Extracellular portion of the chain corresponds to 24 to 485 (SRDSANCKLN…KYIKAAQSVS (462 aa)). Asn219, Asn228, Asn277, and Asn335 each carry an N-linked (GlcNAc...) asparagine glycan. A helical transmembrane segment spans residues 486–506 (FSLSIPSAFLLLAWCFQQVAV). At 507–508 (LQ) the chain is on the cytoplasmic side.

It belongs to the TIKI family. It depends on Mn(2+) as a cofactor. Co(2+) serves as cofactor. Zygotically expressed in the Spemann-Mangold organizer, in particular in the head Spemann-Mangold organizer region responsible for anterior patterning.

The protein localises to the cell membrane. Functionally, metalloprotease that acts as a negative regulator of the Wnt signaling pathway: expressed in the Spemann-Mangold organizer and is required for anterior-neural patterning in head formation in embryos. Acts by mediating the cleavage of the N-terminal residues of a subset of Wnt proteins. Following cleavage, Wnt proteins become oxidized and form large disulfide-bond oligomers, leading to their inactivation. Able to cleave wnt8. This is Metalloprotease TIKI1 (trabd2a) from Xenopus tropicalis (Western clawed frog).